A 182-amino-acid polypeptide reads, in one-letter code: Trypsin inhibitor 2 (182 aa).

Pyrrolidone carboxylic acid is present on Q1. 2 disulfides stabilise this stretch: C40–C84 and C136–C147.

It belongs to the protease inhibitor I3 (leguminous Kunitz-type inhibitor) family.

The chain is Trypsin inhibitor 2 from Psophocarpus tetragonolobus (Winged bean).